Here is a 294-residue protein sequence, read N- to C-terminus: 4-hydroxy-tetrahydrodipicolinate synthase (294 aa).

Residue Thr44 coordinates pyruvate. Tyr132 serves as the catalytic Proton donor/acceptor. Lys160 serves as the catalytic Schiff-base intermediate with substrate. Pyruvate is bound at residue Val202.

The protein belongs to the DapA family. Homotetramer; dimer of dimers.

Its subcellular location is the cytoplasm. It catalyses the reaction L-aspartate 4-semialdehyde + pyruvate = (2S,4S)-4-hydroxy-2,3,4,5-tetrahydrodipicolinate + H2O + H(+). Its pathway is amino-acid biosynthesis; L-lysine biosynthesis via DAP pathway; (S)-tetrahydrodipicolinate from L-aspartate: step 3/4. Functionally, catalyzes the condensation of (S)-aspartate-beta-semialdehyde [(S)-ASA] and pyruvate to 4-hydroxy-tetrahydrodipicolinate (HTPA). This chain is 4-hydroxy-tetrahydrodipicolinate synthase, found in Leptospira borgpetersenii serovar Hardjo-bovis (strain JB197).